Here is a 426-residue protein sequence, read N- to C-terminus: Glutamate-1-semialdehyde 2,1-aminomutase (426 aa).

Lys265 is modified (N6-(pyridoxal phosphate)lysine).

Belongs to the class-III pyridoxal-phosphate-dependent aminotransferase family. HemL subfamily. Homodimer. Pyridoxal 5'-phosphate serves as cofactor.

Its subcellular location is the cytoplasm. It catalyses the reaction (S)-4-amino-5-oxopentanoate = 5-aminolevulinate. The protein operates within porphyrin-containing compound metabolism; protoporphyrin-IX biosynthesis; 5-aminolevulinate from L-glutamyl-tRNA(Glu): step 2/2. This is Glutamate-1-semialdehyde 2,1-aminomutase from Salmonella agona (strain SL483).